A 385-amino-acid polypeptide reads, in one-letter code: Zinc finger protein B385R (385 aa).

The C2H2-type zinc finger occupies 166-190; the sequence is LQCPNCGCIQELMGTIFDETHFYNH.

This sequence belongs to the asfivirus B385R family.

In Ornithodoros (relapsing fever ticks), this protein is Zinc finger protein B385R.